The chain runs to 142 residues: Galactose-6-phosphate isomerase subunit LacA (142 aa).

Belongs to the LacAB/RpiB family. As to quaternary structure, heteromultimeric protein consisting of LacA and LacB.

The catalysed reaction is aldehydo-D-galactose 6-phosphate = keto-D-tagatose 6-phosphate. It participates in carbohydrate metabolism; D-galactose 6-phosphate degradation; D-tagatose 6-phosphate from D-galactose 6-phosphate: step 1/1. This chain is Galactose-6-phosphate isomerase subunit LacA, found in Streptococcus mutans serotype c (strain ATCC 700610 / UA159).